Here is a 346-residue protein sequence, read N- to C-terminus: Aspartate-semialdehyde dehydrogenase (346 aa).

NADP(+) contacts are provided by residues 12–15 (SGAV) and 40–41 (RS). Position 101 (arginine 101) interacts with phosphate. Catalysis depends on cysteine 131, which acts as the Acyl-thioester intermediate. Glutamine 158 contacts substrate. 161–162 (SG) is a binding site for NADP(+). Position 225 (lysine 225) interacts with phosphate. Position 246 (arginine 246) interacts with substrate. Histidine 253 (proton acceptor) is an active-site residue. Position 326 (glutamine 326) interacts with NADP(+).

The protein belongs to the aspartate-semialdehyde dehydrogenase family. Homodimer.

The enzyme catalyses L-aspartate 4-semialdehyde + phosphate + NADP(+) = 4-phospho-L-aspartate + NADPH + H(+). It participates in amino-acid biosynthesis; L-lysine biosynthesis via DAP pathway; (S)-tetrahydrodipicolinate from L-aspartate: step 2/4. It functions in the pathway amino-acid biosynthesis; L-methionine biosynthesis via de novo pathway; L-homoserine from L-aspartate: step 2/3. Its pathway is amino-acid biosynthesis; L-threonine biosynthesis; L-threonine from L-aspartate: step 2/5. Functionally, catalyzes the NADPH-dependent formation of L-aspartate-semialdehyde (L-ASA) by the reductive dephosphorylation of L-aspartyl-4-phosphate. This chain is Aspartate-semialdehyde dehydrogenase, found in Helicobacter pylori (strain ATCC 700392 / 26695) (Campylobacter pylori).